A 701-amino-acid chain; its full sequence is Polyribonucleotide nucleotidyltransferase (701 aa).

Residues aspartate 487 and aspartate 493 each contribute to the Mg(2+) site. In terms of domain architecture, KH spans 554–613 (PTMLAMKIDQDKIRDVIGKGGATIRAICEETKASIDIEDDGSIKIFGETKEAAEAAKQRV). One can recognise an S1 motif domain in the interval 623-691 (GKIYVGKVER…NRGRIKLSIK (69 aa)).

This sequence belongs to the polyribonucleotide nucleotidyltransferase family. In terms of assembly, component of the RNA degradosome, which is a multiprotein complex involved in RNA processing and mRNA degradation. Requires Mg(2+) as cofactor.

It is found in the cytoplasm. The enzyme catalyses RNA(n+1) + phosphate = RNA(n) + a ribonucleoside 5'-diphosphate. Its function is as follows. Involved in mRNA degradation. Catalyzes the phosphorolysis of single-stranded polyribonucleotides processively in the 3'- to 5'-direction. This chain is Polyribonucleotide nucleotidyltransferase, found in Stutzerimonas stutzeri (strain A1501) (Pseudomonas stutzeri).